The primary structure comprises 295 residues: ATP synthase gamma chain (295 aa).

This sequence belongs to the ATPase gamma chain family. In terms of assembly, F-type ATPases have 2 components, CF(1) - the catalytic core - and CF(0) - the membrane proton channel. CF(1) has five subunits: alpha(3), beta(3), gamma(1), delta(1), epsilon(1). CF(0) has three main subunits: a, b and c.

The protein resides in the cell inner membrane. In terms of biological role, produces ATP from ADP in the presence of a proton gradient across the membrane. The gamma chain is believed to be important in regulating ATPase activity and the flow of protons through the CF(0) complex. In Campylobacter curvus (strain 525.92), this protein is ATP synthase gamma chain.